Reading from the N-terminus, the 304-residue chain is Protein ML (304 aa).

In terms of biological role, blocks host IRF3 and IRF7, thereby inhibiting IFN-beta expression and activation of host antiviral state. In Thogoto virus (isolate SiAr 126) (Tho), this protein is Protein ML.